The sequence spans 367 residues: Forkhead box protein I2-B (367 aa).

Over residues 31-40 (QQQNQQLPQR) the composition is skewed to low complexity. The interval 31-51 (QQQNQQLPQRPAAPPAPGYGL) is disordered. The fork-head DNA-binding region spans 124-218 (RPPYSYSSLI…DNGNFRRKRK (95 aa)). Residues 224–254 (VGAGFDEESNEDKKPLALKSLGPDSPGGASV) form a disordered region.

The protein localises to the nucleus. In terms of biological role, possible transcriptional activator. The polypeptide is Forkhead box protein I2-B (foxi2-b) (Xenopus laevis (African clawed frog)).